The sequence spans 380 residues: Glucose-1-phosphate adenylyltransferase (380 aa).

Alpha-D-glucose 1-phosphate contacts are provided by residues Tyr-100, Gly-165, 180-181 (EK), and Ser-191.

Belongs to the bacterial/plant glucose-1-phosphate adenylyltransferase family. In terms of assembly, homotetramer.

The enzyme catalyses alpha-D-glucose 1-phosphate + ATP + H(+) = ADP-alpha-D-glucose + diphosphate. Its pathway is glycan biosynthesis; glycogen biosynthesis. Functionally, involved in the biosynthesis of ADP-glucose, a building block required for the elongation reactions to produce glycogen. Catalyzes the reaction between ATP and alpha-D-glucose 1-phosphate (G1P) to produce pyrophosphate and ADP-Glc. This chain is Glucose-1-phosphate adenylyltransferase, found in Clostridium acetobutylicum (strain ATCC 824 / DSM 792 / JCM 1419 / IAM 19013 / LMG 5710 / NBRC 13948 / NRRL B-527 / VKM B-1787 / 2291 / W).